The chain runs to 301 residues: Ubiquitin thioesterase OTU1 (301 aa).

Residues 4–80 (KVTGAGINQV…TIESSDSNES (77 aa)) form a UBX-like region. One can recognise an OTU domain in the interval 109 to 229 (LSVHPVLDDN…GIHYDSLTMN (121 aa)). The cys-loop stretch occupies residues 114-120 (VLDDNSC). Residue Asp-117 is part of the active site. Catalysis depends on Cys-120, which acts as the Nucleophile. A Glycyl lysine isopeptide (Lys-Gly) (interchain with G-Cter in ubiquitin) cross-link involves residue Lys-160. The tract at residues 169–179 (ILKMESWGGAI) is variable-loop. Positions 218–222 (FNGIH) are his-loop. Ile-221 contacts substrate. His-222 is a catalytic residue. The tract at residues 243–248 (DDVLTA) is S2 site. The C2H2-type zinc-finger motif lies at 270–294 (IKCNTCQMTFVGEREVARHAESTGH). The active site involves His-294.

In terms of assembly, forms a complex composed of CDC48, NPL4, UFD1, DOA1, SHP1 and deubiquitinase OTU1; within the complex interacts with CDC48 and DOA1/UFD3.

It is found in the cytoplasm. It localises to the nucleus. It carries out the reaction Thiol-dependent hydrolysis of ester, thioester, amide, peptide and isopeptide bonds formed by the C-terminal Gly of ubiquitin (a 76-residue protein attached to proteins as an intracellular targeting signal).. Hydrolase that can remove conjugated ubiquitin from proteins and may therefore play an important regulatory role at the level of protein turnover by preventing degradation. Participates in the regulation of the ubiquitin conjugation pathway involving CDC48 by hindering multiubiquitination of substrates at the CDC48 chaperone. May be indirectly involved in PIS1 gene expression. The sequence is that of Ubiquitin thioesterase OTU1 (OTU1) from Saccharomyces cerevisiae (strain ATCC 204508 / S288c) (Baker's yeast).